Here is a 496-residue protein sequence, read N- to C-terminus: MLKIKLEKTTFENTKAECGLVFIVNKDFSHAWVKNKELLETFKYESEGVFLDQENKILYVGVKEDDVHLLRESACLAVRTLKKLAFKSVKVGVYTCGTHSKDNALLENLKALFLGLKLGLYEYDTFKSNKKESVLKEAIVALELHKPCEKTCANSLEKNAKEALKYAEIMTESLNIVKDLVNTPPMIGTPVYMAEVAQKVAKENHLEIHVHDEKFLEEKKMNAFLAVNKASLGVNPPRLIHLVYKPKKAKKKIALVGKGLTYDCGGLSLKPADYMVTMKADKGGGSAVIGLLNALAKLGVEAEVHGIIGATENMIGPAAYKPDDILISKEGKSIEVRNTDAEGRLVLADCLSYAQDLNPDVIVDFATLTGACVVGLGEFTSAIMGHNEELKNLFETSGLESGELLAKLPFNRHLKKLIESKIADVCNISSSRYGGAITAGLFLNEFIRDEFKDKWLHIDIAGPAYVEKEWDVNSFGASGAGVRACTAFVEELLKKA.

The Mn(2+) site is built by K258 and D263. Residue K270 is part of the active site. Residues D281, D340, and E342 each contribute to the Mn(2+) site. R344 is an active-site residue.

This sequence belongs to the peptidase M17 family. It depends on Mn(2+) as a cofactor.

It localises to the cytoplasm. The enzyme catalyses Release of an N-terminal amino acid, Xaa-|-Yaa-, in which Xaa is preferably Leu, but may be other amino acids including Pro although not Arg or Lys, and Yaa may be Pro. Amino acid amides and methyl esters are also readily hydrolyzed, but rates on arylamides are exceedingly low.. It carries out the reaction Release of an N-terminal amino acid, preferentially leucine, but not glutamic or aspartic acids.. Its function is as follows. Presumably involved in the processing and regular turnover of intracellular proteins. Catalyzes the removal of unsubstituted N-terminal amino acids from various peptides. The sequence is that of Probable cytosol aminopeptidase from Helicobacter pylori (strain P12).